The primary structure comprises 437 residues: MNGTGSVGHRWNSLSPEPHSGTESTASTPFVKSEFPFDDDLFGIDQVNNVKPHPMDMPCNLPIQPIEYNRRFSKDADHSTFVKNEIEENILNFNVNPEIAQDNGLDTQQIDIYRDLILRHLIQDISTTCAKLGLPNDFYLWSSEHGARWINEMCMQFNLQPPRNCSITGIDLLGMSQKDFEMILPAGGDTLHAQLQVWKTGTSDYVKAFENYHPPVTVQSSGMTAAENNMQSKTNWLASTNNQTNNMAAAENPNHPFFNGNGGYPNMSMSSFFQQGTVLPSPSNSDTSSNGSSQDMNDDDIDLHMNNSNCGFSNFFHNQGYMNSPIDAMCNGSEGDDDERAYTRHQGTVHLWQFIRELLDQPKQYSACVRWVDRDEGTFKIESSLLLARYWGQRKNRSQMNYDKLSRSLRQYYKKGIIQKPEKKQRLVYKFLPPYNL.

The interval 1 to 30 is disordered; the sequence is MNGTGSVGHRWNSLSPEPHSGTESTASTPF. Positions 21 to 30 are enriched in polar residues; it reads GTESTASTPF. Lys-32 is covalently cross-linked (Glycyl lysine isopeptide (Lys-Gly) (interchain with G-Cter in SUMO)). The residue at position 73 (Ser-73) is a Phosphoserine. A Glycyl lysine isopeptide (Lys-Gly) (interchain with G-Cter in SUMO) cross-link involves residue Lys-83. The PNT domain maps to 120–202; it reads HLIQDISTTC…AQLQVWKTGT (83 aa). The segment at 275–302 is disordered; the sequence is QGTVLPSPSNSDTSSNGSSQDMNDDDID. Low complexity predominate over residues 280–293; it reads PSPSNSDTSSNGSS. Residues 349–432 constitute a DNA-binding region (ETS); it reads VHLWQFIREL…KKQRLVYKFL (84 aa).

This sequence belongs to the ETS family. In terms of assembly, may interact with cebp-1. May interact with tdpt-1 to facilitate its sumoylation. In terms of processing, phosphorylation is required for axon regeneration. Post-translationally, sumoylated; sumoylation inhibits phosphorylation, which is required for probable interaction with cebp-1 and consequently the expression of svh-2. In terms of tissue distribution, expressed in cells of the anterior and posterior bulbs of the pharynx, seam cells, a few unidentified cells of the vulva, the hypodermis, several unidentified neurons, labial socket cells of the head and rectal cells.

It localises to the nucleus. Its function is as follows. Transcription factor which binds to 5'-GGAA/T-3' DNA consensus sequences. Both positively and negatively regulates the expression of target genes. Plays a role in the regulation of adult lifespan, which may in part be through modulation of daf-16 activity. Regulates the expression of genes such as svh-2 in response to axon injury and in addition, may function downstream of the cAMP signaling pathway to promote axon regeneration. Regulates the expression of lipid metabolism genes and may also control the expression of the RNA-binding protein rege-1 which too has been implicated in the control of fat accumulation. The chain is Transcription factor ets-4 from Caenorhabditis elegans.